Consider the following 118-residue polypeptide: Holo-[acyl-carrier-protein] synthase (118 aa).

Mg(2+) is bound by residues D5 and E51.

It belongs to the P-Pant transferase superfamily. AcpS family. It depends on Mg(2+) as a cofactor.

It is found in the cytoplasm. It catalyses the reaction apo-[ACP] + CoA = holo-[ACP] + adenosine 3',5'-bisphosphate + H(+). Functionally, transfers the 4'-phosphopantetheine moiety from coenzyme A to a Ser of acyl-carrier-protein. This chain is Holo-[acyl-carrier-protein] synthase, found in Helicobacter pylori (strain P12).